Reading from the N-terminus, the 341-residue chain is tRNA N6-adenosine threonylcarbamoyltransferase (341 aa).

Fe cation is bound by residues His-115 and His-119. Residues 138-142 (VVSGG), Asp-171, Gly-184, Asp-188, and Asn-279 each bind substrate. Fe cation is bound at residue Asp-307.

The protein belongs to the KAE1 / TsaD family. It depends on Fe(2+) as a cofactor.

The protein localises to the cytoplasm. The enzyme catalyses L-threonylcarbamoyladenylate + adenosine(37) in tRNA = N(6)-L-threonylcarbamoyladenosine(37) in tRNA + AMP + H(+). Required for the formation of a threonylcarbamoyl group on adenosine at position 37 (t(6)A37) in tRNAs that read codons beginning with adenine. Is involved in the transfer of the threonylcarbamoyl moiety of threonylcarbamoyl-AMP (TC-AMP) to the N6 group of A37, together with TsaE and TsaB. TsaD likely plays a direct catalytic role in this reaction. In Clostridium novyi (strain NT), this protein is tRNA N6-adenosine threonylcarbamoyltransferase.